A 587-amino-acid chain; its full sequence is Solute carrier family 13 member 2 (587 aa).

4 consecutive transmembrane segments (helical) span residues 13-33, 53-73, 86-106, and 136-156; these read FYLI…IVQT, ALPL…MGIM, TNIL…WNLH, and SMWI…HAVL. The interval 188-208 is disordered; it reads KLDNGQPVSAPSEPRTQKTQE. 8 helical membrane passes run 264-284, 329-349, 367-387, 407-427, 445-465, 477-497, 506-526, and 535-555; these read FAFP…QVLF, VLFV…FPGW, TVAI…PGLM, TVND…FALA, PLQH…IAIF, LFLP…LYVM, LAFM…FGGL, and GFLL…SWSI.

It belongs to the SLC13A/DASS transporter (TC 2.A.47) family. NADC subfamily. Expressed in large and small intestine and in the kidney proximal tubules.

It localises to the apical cell membrane. The enzyme catalyses succinate(out) + 3 Na(+)(out) = succinate(in) + 3 Na(+)(in). It carries out the reaction fumarate(out) + 3 Na(+)(out) = fumarate(in) + 3 Na(+)(in). It catalyses the reaction 2-oxoglutarate(out) + 3 Na(+)(out) = 2-oxoglutarate(in) + 3 Na(+)(in). Its activity is regulated as follows. Li(+) decreases succinate transport in the presence of Na(+), by competing at one of the three cation binding sites. Its function is as follows. Low-affinity sodium-dicarboxylate cotransporter, that mediates the entry of citric acid cycle intermediates, such as succinate, citrate, fumarate and alpha-ketoglutarate (2-oxoglutarate) into the small intestine and renal proximal tubule. Transports the dicarboxylate into the cell with a probable stoichiometry of 3 Na(+) for 1 divalent dicarboxylate, rendering the process electrogenic. Citrate is transported in protonated form as a divalent anion, rather than the trivalent form which is normally found in blood. Has a critical role in renal dicarboxylate transport. This Rattus norvegicus (Rat) protein is Solute carrier family 13 member 2 (Slc13a2).